The following is a 506-amino-acid chain: Acetaldehyde dehydrogenase 2 (506 aa).

240–245 contributes to the NAD(+) binding site; it reads GETTTG. Residues E262 and C301 contribute to the active site.

Belongs to the aldehyde dehydrogenase family.

It catalyses the reaction an aldehyde + NAD(+) + H2O = a carboxylate + NADH + 2 H(+). It participates in alcohol metabolism; ethanol degradation; acetate from ethanol: step 2/2. It functions in the pathway ketone degradation; acetoin degradation. Its function is as follows. Involved in the catabolism of acetoin and ethanol. This is Acetaldehyde dehydrogenase 2 (acoD) from Cupriavidus necator (strain ATCC 17699 / DSM 428 / KCTC 22496 / NCIMB 10442 / H16 / Stanier 337) (Ralstonia eutropha).